Consider the following 318-residue polypeptide: NADH-ubiquinone oxidoreductase chain 1 (318 aa).

8 consecutive transmembrane segments (helical) span residues 2–22, 76–96, 98–118, 140–160, 171–191, 217–237, 253–273, and 294–314; these read FMVN…FLTL, TLAL…HPLI, FNLG…SILW, ISYE…SGSF, HSWL…STLA, AGSF…MNAL, ELYT…FLWI, and LPLT…TSGI.

Belongs to the complex I subunit 1 family. As to quaternary structure, core subunit of respiratory chain NADH dehydrogenase (Complex I) which is composed of 45 different subunits.

The protein resides in the mitochondrion inner membrane. It carries out the reaction a ubiquinone + NADH + 5 H(+)(in) = a ubiquinol + NAD(+) + 4 H(+)(out). Its function is as follows. Core subunit of the mitochondrial membrane respiratory chain NADH dehydrogenase (Complex I) which catalyzes electron transfer from NADH through the respiratory chain, using ubiquinone as an electron acceptor. Essential for the catalytic activity and assembly of complex I. In Ateles paniscus (Black spider monkey), this protein is NADH-ubiquinone oxidoreductase chain 1 (MT-ND1).